We begin with the raw amino-acid sequence, 650 residues long: MAGNIFPVPESWAKSAFCDNETYLKMYEQSVKDPEGFWGEHAKRIDWFQPWTKVKSGSFEGDVRFKWFENGKLNVAYNCLDRNLAKRGDQVAIIWEGDDPKVSKYITYRELHDQVCRFANVLKAQGLKKGDRATIYLPMIPELAVAMLACARIGVVHSIVFAGFSPESLAGRILDCGGKVVITADEGLRGGKPIPLKENTEEALKKCPDVQKVIVVKHTGGKVPVVPGRDVDWTEAIKAASPDCPPEVMDAEDPLFILYTSGSTGKPKGVLHTTGGYLVYTALSHQYVFDYHDGDIYWCTADIGWVTGHSYIIYGPLANGATTVMFEGIPNYPDWSRFWNVVDKHKINIFYTAPTAIRALMRQGEAPVRATSRKSLKLLGTVGEPINPEAWLWYYNNVGEQRCPIVDTWWQTETGGILITPLPGATALKPGSATRPFFGVQPAIIDPEGKMLDGPGSGYLIIKESWPGMLRTVYGDHERFKQTYFSNYPGLYFTGDGARRDEDGYYWITGRVDDVINVSGHRLGTAEVESALVAHPAVAESAVVGFPHDIKGQGIYAYVTLKANWEHSDELRQELVKWVRKEIGPIATPDYIQWAPGLPKTRSGKIMRRILRKIAANEIDNLGDTTTLAEPAVVEDLIKNRQAVASSGKA.

Residues 189–192 (RGGK), Thr-307, and Asn-331 each bind CoA. Residues 383-385 (GEP), 407-412 (DTWWQT), Asp-496, and Arg-511 each bind ATP. Ser-519 is a CoA binding site. Arg-522 is an ATP binding site. 3 residues coordinate Mg(2+): Val-533, His-535, and Val-538. Position 580 (Arg-580) interacts with CoA. At Lys-605 the chain carries N6-acetyllysine.

The protein belongs to the ATP-dependent AMP-binding enzyme family. Mg(2+) is required as a cofactor. Acetylated. Deacetylation by the SIR2-homolog deacetylase activates the enzyme.

The catalysed reaction is acetate + ATP + CoA = acetyl-CoA + AMP + diphosphate. In terms of biological role, catalyzes the conversion of acetate into acetyl-CoA (AcCoA), an essential intermediate at the junction of anabolic and catabolic pathways. AcsA undergoes a two-step reaction. In the first half reaction, AcsA combines acetate with ATP to form acetyl-adenylate (AcAMP) intermediate. In the second half reaction, it can then transfer the acetyl group from AcAMP to the sulfhydryl group of CoA, forming the product AcCoA. The sequence is that of Acetyl-coenzyme A synthetase from Syntrophobacter fumaroxidans (strain DSM 10017 / MPOB).